The chain runs to 609 residues: Thiamine metabolism regulatory protein THI3 (609 aa).

Residues Ser578–Phe598 form a disordered region.

The protein belongs to the TPP enzyme family. Requires Mg(2+) as cofactor. Thiamine diphosphate serves as cofactor.

It is found in the nucleus. The catalysed reaction is 4-methyl-2-oxopentanoate + H(+) = 3-methylbutanal + CO2. The enzyme catalyses (S)-3-methyl-2-oxopentanoate + H(+) = 2-methylbutanal + CO2. Its pathway is amino-acid degradation; Ehrlich pathway. One of five 2-oxo acid decarboxylases (PDC1, PDC5, PDC6, ARO10, and THI3) involved in amino acid catabolism. The enzyme catalyzes the decarboxylation of amino acids, which, in a first step, have been transaminated to the corresponding 2-oxo acids (alpha-keto-acids). In a third step, the resulting aldehydes are reduced to alcohols, collectively referred to as fusel oils or alcohols. Its preferred substrates are the transaminated amino acids derived from leucine (4-methyl-2-oxopentanoate, also alpha-keto-isocaproate) and isoleucine ((3S)-3-methyl-2-oxopentanoate, also alpha-keto-beta-methylvalerate), whereas transaminated valine, transaminated aromatic amino acids, and pyruvate are no substrates. In analogy to the pyruvate decarboxylases the enzyme may in a side-reaction catalyze condensation (or carboligation) reactions leading to the formation of 2-hydroxy ketone, collectively called acyloins. The enzyme is also positively regulating the thiamine metabolism by a molecular mechanism that may involve thiamine concentration sensing and signal transmission. The polypeptide is Thiamine metabolism regulatory protein THI3 (THI3) (Saccharomyces cerevisiae (strain ATCC 204508 / S288c) (Baker's yeast)).